A 288-amino-acid chain; its full sequence is 4-diphosphocytidyl-2-C-methyl-D-erythritol kinase (288 aa).

Lys-13 is an active-site residue. 96–106 (PMGGGIGGGSS) provides a ligand contact to ATP. Residue Asp-138 is part of the active site.

The protein belongs to the GHMP kinase family. IspE subfamily.

It carries out the reaction 4-CDP-2-C-methyl-D-erythritol + ATP = 4-CDP-2-C-methyl-D-erythritol 2-phosphate + ADP + H(+). The protein operates within isoprenoid biosynthesis; isopentenyl diphosphate biosynthesis via DXP pathway; isopentenyl diphosphate from 1-deoxy-D-xylulose 5-phosphate: step 3/6. In terms of biological role, catalyzes the phosphorylation of the position 2 hydroxy group of 4-diphosphocytidyl-2C-methyl-D-erythritol. In Aliivibrio fischeri (strain ATCC 700601 / ES114) (Vibrio fischeri), this protein is 4-diphosphocytidyl-2-C-methyl-D-erythritol kinase.